We begin with the raw amino-acid sequence, 684 residues long: Glycine--tRNA ligase beta subunit (684 aa).

The protein belongs to the class-II aminoacyl-tRNA synthetase family. Tetramer of two alpha and two beta subunits.

The protein resides in the cytoplasm. The catalysed reaction is tRNA(Gly) + glycine + ATP = glycyl-tRNA(Gly) + AMP + diphosphate. In Ectopseudomonas mendocina (strain ymp) (Pseudomonas mendocina), this protein is Glycine--tRNA ligase beta subunit.